The primary structure comprises 269 residues: Putative pyruvate, phosphate dikinase regulatory protein (269 aa).

Residue 147 to 154 (GLSRTSKT) coordinates ADP.

The protein belongs to the pyruvate, phosphate/water dikinase regulatory protein family. PDRP subfamily.

The catalysed reaction is N(tele)-phospho-L-histidyl/L-threonyl-[pyruvate, phosphate dikinase] + ADP = N(tele)-phospho-L-histidyl/O-phospho-L-threonyl-[pyruvate, phosphate dikinase] + AMP + H(+). The enzyme catalyses N(tele)-phospho-L-histidyl/O-phospho-L-threonyl-[pyruvate, phosphate dikinase] + phosphate + H(+) = N(tele)-phospho-L-histidyl/L-threonyl-[pyruvate, phosphate dikinase] + diphosphate. Its function is as follows. Bifunctional serine/threonine kinase and phosphorylase involved in the regulation of the pyruvate, phosphate dikinase (PPDK) by catalyzing its phosphorylation/dephosphorylation. The sequence is that of Putative pyruvate, phosphate dikinase regulatory protein from Clostridium botulinum (strain 657 / Type Ba4).